A 130-amino-acid polypeptide reads, in one-letter code: Small ribosomal subunit protein uS9 (130 aa).

Residues 98–130 (LKRAGMLTRDPRMKERKKPGLKGARRSPQFSKR) form a disordered region. Over residues 111 to 130 (KERKKPGLKGARRSPQFSKR) the composition is skewed to basic residues.

This sequence belongs to the universal ribosomal protein uS9 family.

The polypeptide is Small ribosomal subunit protein uS9 (Macrococcus caseolyticus (strain JCSC5402) (Macrococcoides caseolyticum)).